Here is a 59-residue protein sequence, read N- to C-terminus: Large ribosomal subunit protein uL30 (59 aa).

It belongs to the universal ribosomal protein uL30 family. Part of the 50S ribosomal subunit.

This Clostridium kluyveri (strain ATCC 8527 / DSM 555 / NBRC 12016 / NCIMB 10680 / K1) protein is Large ribosomal subunit protein uL30.